The chain runs to 242 residues: DNA repair protein RecO (242 aa).

It belongs to the RecO family.

In terms of biological role, involved in DNA repair and RecF pathway recombination. The chain is DNA repair protein RecO from Dechloromonas aromatica (strain RCB).